The primary structure comprises 133 residues: Holo-[acyl-carrier-protein] synthase (133 aa).

D8 and E64 together coordinate Mg(2+).

This sequence belongs to the P-Pant transferase superfamily. AcpS family. Requires Mg(2+) as cofactor.

It is found in the cytoplasm. It catalyses the reaction apo-[ACP] + CoA = holo-[ACP] + adenosine 3',5'-bisphosphate + H(+). Its function is as follows. Transfers the 4'-phosphopantetheine moiety from coenzyme A to a Ser of acyl-carrier-protein. The polypeptide is Holo-[acyl-carrier-protein] synthase (Shewanella loihica (strain ATCC BAA-1088 / PV-4)).